The sequence spans 402 residues: Argininosuccinate synthase (402 aa).

9 to 17 contributes to the ATP binding site; the sequence is AYSGGLDTS. Tyr87 serves as a coordination point for L-citrulline. Gly117 lines the ATP pocket. L-aspartate is bound by residues Thr119, Asn123, and Asp124. Asn123 lines the L-citrulline pocket. 5 residues coordinate L-citrulline: Arg127, Ser176, Ser185, Glu261, and Tyr273.

The protein belongs to the argininosuccinate synthase family. Type 1 subfamily. As to quaternary structure, homotetramer.

It localises to the cytoplasm. It carries out the reaction L-citrulline + L-aspartate + ATP = 2-(N(omega)-L-arginino)succinate + AMP + diphosphate + H(+). The protein operates within amino-acid biosynthesis; L-arginine biosynthesis; L-arginine from L-ornithine and carbamoyl phosphate: step 2/3. In Chlorobium phaeobacteroides (strain BS1), this protein is Argininosuccinate synthase.